The sequence spans 354 residues: MTAVNVALIRDTKWLTLEVCREFQRGTCSRADADCKFAHPPRVCHVENGRVVACFDSLKGRCTRENCKYLHPPPHLKTQLEINGRNNLIQQKTAAAMFAQQMQLMLQNAQMSSLGSFPMTPSIPANPPMAFNPYIPHPGMGLVPAELVPNTPVLIPGNPPLAMPGAVGPKLMRSDKLEVCREFQRGNCTRGENDCRYAHPTDASMIEASDNTVTICMDYIKGRCSREKCKYFHPPAHLQARLKAAHHQMNHSAASAMALQPGTLQLIPKRSALEKPNGATPVFNPTVFHCQQALTNLQLPQPAFIPAGPILCMAPASNIVPMMHGATPTTVSAATTPATSVPFAAPTTGNQLKF.

4 consecutive C3H1-type zinc fingers follow at residues 14–42 (WLTL…HPPR), 48–74 (NGRV…HPPP), 174–202 (SDKL…HPTD), and 210–236 (DNTV…HPPA).

It belongs to the muscleblind family. Highly expressed in the placenta.

The protein localises to the nucleus. It localises to the cytoplasm. In terms of biological role, mediates pre-mRNA alternative splicing regulation. Acts either as activator or repressor of splicing on specific pre-mRNA targets. Inhibits cardiac troponin-T (TNNT2) pre-mRNA exon inclusion but induces insulin receptor (IR) pre-mRNA exon inclusion in muscle. Antagonizes the alternative splicing activity pattern of CELF proteins. May play a role in myotonic dystrophy pathophysiology (DM). Could inhibit terminal muscle differentiation, acting at approximately the time of myogenin induction. The protein is Muscleblind-like protein 3 (MBNL3) of Homo sapiens (Human).